A 135-amino-acid chain; its full sequence is Ribosome-binding factor A (135 aa).

The protein belongs to the RbfA family. In terms of assembly, monomer. Binds 30S ribosomal subunits, but not 50S ribosomal subunits or 70S ribosomes.

Its subcellular location is the cytoplasm. Its function is as follows. One of several proteins that assist in the late maturation steps of the functional core of the 30S ribosomal subunit. Associates with free 30S ribosomal subunits (but not with 30S subunits that are part of 70S ribosomes or polysomes). Required for efficient processing of 16S rRNA. May interact with the 5'-terminal helix region of 16S rRNA. This is Ribosome-binding factor A from Methylobacterium nodulans (strain LMG 21967 / CNCM I-2342 / ORS 2060).